The primary structure comprises 152 residues: Ribosomal RNA large subunit methyltransferase H (152 aa).

S-adenosyl-L-methionine is bound by residues Leu-70, Gly-101, and 120–125; that span reads LSDLTF.

Belongs to the RNA methyltransferase RlmH family. Homodimer.

It localises to the cytoplasm. The catalysed reaction is pseudouridine(1915) in 23S rRNA + S-adenosyl-L-methionine = N(3)-methylpseudouridine(1915) in 23S rRNA + S-adenosyl-L-homocysteine + H(+). Specifically methylates the pseudouridine at position 1915 (m3Psi1915) in 23S rRNA. The protein is Ribosomal RNA large subunit methyltransferase H of Pseudothermotoga lettingae (strain ATCC BAA-301 / DSM 14385 / NBRC 107922 / TMO) (Thermotoga lettingae).